A 777-amino-acid chain; its full sequence is DISP complex protein LRCH3 (777 aa).

LRR repeat units lie at residues 56–79 (AAVTGVLSLSGRKLREFPRGAANH), 81–104 (LTDTTRADLSRNRLSEIPIEACHF), 105–127 (VSLENLNLYQNCIRYIPEAILNL), 128–150 (QALTFLNISRNQLSTLPVHLCNL), 152–172 (LKVLIASNNKLVSLPEEIGHL), 173–195 (RHLMELDVSCNEIQTIPSQIGNL), 196–218 (EALRDLNVRRNHLVHLPEELAEL), 220–239 (LIRLDFSCNKITTIPVCYRN), 240–264 (LRHLQTITLDNNPLQSPPAQICIKG), and 266–290 (VHIFKYLNIQACKIAPDLPDYDRRP). The interval 56-290 (AAVTGVLSLS…PDLPDYDRRP (235 aa)) is mediates interaction with DOCK7. A phosphoserine mark is found at serine 324, serine 415, and serine 419. Residues 382-648 (TAEEEEAEVR…DSTDSITGQN (267 aa)) are mediates direct interaction with MYO6. The interval 568 to 590 (FTPLKSDDRPNALLSSPATETVH) is disordered. Phosphoserine occurs at positions 611 and 628. Residues 621 to 653 (ETNKGHASPLPPSAAPTTDSTDSITGQNSRQRE) form a disordered region. Residues 635–645 (APTTDSTDSIT) are compositionally biased toward low complexity. In terms of domain architecture, Calponin-homology (CH) spans 652 to 765 (REEELELIDQ…VTVQALLELA (114 aa)).

In terms of assembly, component of the DOCK7-induced septin displacement/DISP complex, at least composed of DOCK7, LRCH3 and MYO6.

The protein resides in the cytoplasm. Functionally, as part of the DISP complex, may regulate the association of septins with actin and thereby regulate the actin cytoskeleton. In Homo sapiens (Human), this protein is DISP complex protein LRCH3.